Reading from the N-terminus, the 24-residue chain is FLPLLAGLAANFLPKIFCKITKKC.

Expressed by the skin glands.

The protein localises to the secreted. Functionally, antimicrobial peptide active against the Gram-positive bacterium S.aureus (MIC=12.5 uM) and against the Gram-negative bacteria E.coli (MIC=25 uM). The chain is Brevinin-1GRa from Odorrana grahami (Yunnanfu frog).